The primary structure comprises 119 residues: Ribonuclease P protein component (119 aa).

The protein belongs to the RnpA family. As to quaternary structure, consists of a catalytic RNA component (M1 or rnpB) and a protein subunit.

It carries out the reaction Endonucleolytic cleavage of RNA, removing 5'-extranucleotides from tRNA precursor.. Its function is as follows. RNaseP catalyzes the removal of the 5'-leader sequence from pre-tRNA to produce the mature 5'-terminus. It can also cleave other RNA substrates such as 4.5S RNA. The protein component plays an auxiliary but essential role in vivo by binding to the 5'-leader sequence and broadening the substrate specificity of the ribozyme. The protein is Ribonuclease P protein component of Streptococcus equi subsp. zooepidemicus (strain MGCS10565).